Here is a 343-residue protein sequence, read N- to C-terminus: Photosystem II protein D1 (343 aa).

The next 3 helical transmembrane spans lie at 28–45 (YIGW…VSTV), 117–132 (HFLA…EYEY), and 141–155 (WIYL…AASA). Histidine 117 provides a ligand contact to chlorophyll a. Tryptophan 125 serves as a coordination point for pheophytin a. Aspartate 169 and glutamate 188 together coordinate [CaMn4O5] cluster. The chain crosses the membrane as a helical span at residues 196–217 (FHILGVSAVFGGSLFSAMHGSL). Histidine 197 contributes to the chlorophyll a binding site. A quinone is bound by residues histidine 214 and 263–264 (SF). Histidine 214 lines the Fe cation pocket. A Fe cation-binding site is contributed by histidine 271. A helical transmembrane segment spans residues 273 to 287 (FLAAWPVIGIWCTAI). Positions 331, 332, 341, and 343 each coordinate [CaMn4O5] cluster.

Belongs to the reaction center PufL/M/PsbA/D family. As to quaternary structure, PSII is composed of 1 copy each of membrane proteins PsbA, PsbB, PsbC, PsbD, PsbE, PsbF, PsbH, PsbI, PsbJ, PsbK, PsbL, PsbM, PsbT, PsbX, PsbY, PsbZ, Psb30/Ycf12, at least 3 peripheral proteins of the oxygen-evolving complex and a large number of cofactors. It forms dimeric complexes. It depends on The D1/D2 heterodimer binds P680, chlorophylls that are the primary electron donor of PSII, and subsequent electron acceptors. It shares a non-heme iron and each subunit binds pheophytin, quinone, additional chlorophylls, carotenoids and lipids. D1 provides most of the ligands for the Mn4-Ca-O5 cluster of the oxygen-evolving complex (OEC). There is also a Cl(-1) ion associated with D1 and D2, which is required for oxygen evolution. The PSII complex binds additional chlorophylls, carotenoids and specific lipids. as a cofactor. In terms of processing, tyr-160 forms a radical intermediate that is referred to as redox-active TyrZ, YZ or Y-Z.

Its subcellular location is the plastid. It is found in the chloroplast thylakoid membrane. The catalysed reaction is 2 a plastoquinone + 4 hnu + 2 H2O = 2 a plastoquinol + O2. In terms of biological role, photosystem II (PSII) is a light-driven water:plastoquinone oxidoreductase that uses light energy to abstract electrons from H(2)O, generating O(2) and a proton gradient subsequently used for ATP formation. It consists of a core antenna complex that captures photons, and an electron transfer chain that converts photonic excitation into a charge separation. The D1/D2 (PsbA/PsbD) reaction center heterodimer binds P680, the primary electron donor of PSII as well as several subsequent electron acceptors. The polypeptide is Photosystem II protein D1 (Prorocentrum micans (Red tide dinoflagellate)).